The primary structure comprises 212 residues: Ribosomal RNA small subunit methyltransferase G (212 aa).

S-adenosyl-L-methionine is bound by residues glycine 80, leucine 85, 131-132 (VE), and arginine 146.

This sequence belongs to the methyltransferase superfamily. RNA methyltransferase RsmG family.

It is found in the cytoplasm. The catalysed reaction is guanosine(527) in 16S rRNA + S-adenosyl-L-methionine = N(7)-methylguanosine(527) in 16S rRNA + S-adenosyl-L-homocysteine. Functionally, specifically methylates the N7 position of guanine in position 527 of 16S rRNA. The protein is Ribosomal RNA small subunit methyltransferase G of Azoarcus sp. (strain BH72).